Consider the following 240-residue polypeptide: Uridylate kinase (240 aa).

13–16 (KLSG) contributes to the ATP binding site. Residues 21–26 (GDKGFG) form an involved in allosteric activation by GTP region. Gly55 lines the UMP pocket. The ATP site is built by Gly56 and Arg60. UMP-binding positions include Asp75 and 136 to 143 (IGNPYFST). Asn164, Tyr170, and Asp173 together coordinate ATP.

This sequence belongs to the UMP kinase family. In terms of assembly, homohexamer.

It localises to the cytoplasm. It carries out the reaction UMP + ATP = UDP + ADP. Its pathway is pyrimidine metabolism; CTP biosynthesis via de novo pathway; UDP from UMP (UMPK route): step 1/1. Its activity is regulated as follows. Allosterically activated by GTP. Inhibited by UTP. In terms of biological role, catalyzes the reversible phosphorylation of UMP to UDP. The polypeptide is Uridylate kinase (Staphylococcus epidermidis (strain ATCC 35984 / DSM 28319 / BCRC 17069 / CCUG 31568 / BM 3577 / RP62A)).